Reading from the N-terminus, the 57-residue chain is Weak toxin CM-1b (57 aa).

4 disulfide bridges follow: cysteine 3/cysteine 19, cysteine 12/cysteine 37, cysteine 40/cysteine 49, and cysteine 50/cysteine 55.

Belongs to the three-finger toxin family. Short-chain subfamily. Orphan group XX sub-subfamily. In terms of tissue distribution, expressed by the venom gland.

The protein localises to the secreted. The polypeptide is Weak toxin CM-1b (Hemachatus haemachatus (Rinkhals)).